Consider the following 311-residue polypeptide: Homeobox protein knotted-1-like 10 (311 aa).

2 disordered regions span residues 1–45 and 153–184; these read MEDL…PATT and LCGG…DAAD. Residues 12–22 show a composition bias toward gly residues; that stretch reads SRGGGGGGGGA. The region spanning 197 to 217 is the ELK domain; sequence ELKEMLLKKYSGCLSRLRSEF. The homeobox; TALE-type DNA-binding region spans 218 to 281; the sequence is LKKRKKGKLP…NQRKRHWKPS (64 aa).

The protein belongs to the TALE/KNOX homeobox family.

It is found in the nucleus. In terms of biological role, probable transcription factor that may be involved in shoot formation during embryogenesis. The protein is Homeobox protein knotted-1-like 10 (OSH71) of Oryza sativa subsp. indica (Rice).